The chain runs to 340 residues: MEITKSAAGTLNQQDVSKYVLTNQQGTQVAVLTWGATLQEFSVVEDGKRHSLIVNKPDLAGYDHNPYYLCQALGRVAGRIAGAQFELDGQTVHLEANEEPNASHGGPHGFTFVNWDATTNQTADTASVVLTHTSTPADDRYPGNLETTITYTLTEENRLDITFDAQSDAATLFNPTIHTYFNVTDDQHDLDQQWVKLSGDKRLVLDQAKIPTGEMVPTAGTGYDFSQPRTVKDGLDQLHQTGQVEYDDAFVVEPSKDTPIATIGDTTGHREVSIYSDRNGLVVFTANPTDDARADVRDYNALAMEAQTLPDAIHHADFGDVVLPANQPVEHTISYQYTRK.

R79 contacts substrate. The active-site Proton donor is the H178. D247 serves as a coordination point for substrate. E305 functions as the Proton acceptor in the catalytic mechanism.

It belongs to the aldose epimerase family.

It carries out the reaction alpha-maltose = beta-maltose. Its pathway is carbohydrate metabolism; hexose metabolism. Functionally, catalyzes the interconversion of alpha and beta anomers of maltose. In Levilactobacillus brevis (strain ATCC 367 / BCRC 12310 / CIP 105137 / JCM 1170 / LMG 11437 / NCIMB 947 / NCTC 947) (Lactobacillus brevis), this protein is Maltose epimerase.